The chain runs to 300 residues: Kynurenine formamidase (300 aa).

Positions 86-90 match the HGGXW motif; sequence HGGYW. Catalysis depends on S157, which acts as the Nucleophile. Residues D244 and H276 contribute to the active site.

This sequence belongs to the kynurenine formamidase family. In terms of assembly, homodimer.

The enzyme catalyses N-formyl-L-kynurenine + H2O = L-kynurenine + formate + H(+). It participates in amino-acid degradation; L-tryptophan degradation via kynurenine pathway; L-kynurenine from L-tryptophan: step 2/2. Functionally, catalyzes the hydrolysis of N-formyl-L-kynurenine to L-kynurenine, the second step in the kynurenine pathway of tryptophan degradation. Required for elimination of toxic metabolites. In Drosophila melanogaster (Fruit fly), this protein is Kynurenine formamidase (KFase).